The sequence spans 138 residues: Cysteine desulfuration protein SufE (138 aa).

Cysteine 51 serves as the catalytic Cysteine persulfide intermediate.

It belongs to the SufE family. As to quaternary structure, homodimer. Interacts with SufS.

It is found in the cytoplasm. It participates in cofactor biosynthesis; iron-sulfur cluster biosynthesis. In terms of biological role, participates in cysteine desulfuration mediated by SufS. Cysteine desulfuration mobilizes sulfur from L-cysteine to yield L-alanine and constitutes an essential step in sulfur metabolism for biosynthesis of a variety of sulfur-containing biomolecules. Functions as a sulfur acceptor for SufS, by mediating the direct transfer of the sulfur atom from the S-sulfanylcysteine of SufS, an intermediate product of cysteine desulfuration process. This Salmonella arizonae (strain ATCC BAA-731 / CDC346-86 / RSK2980) protein is Cysteine desulfuration protein SufE.